Consider the following 537-residue polypeptide: Atrial natriuretic peptide receptor 3 (537 aa).

Positions 1-20 (MPSLLVLTFSACVLLGWALL) are cleaved as a signal peptide. Residues 21 to 41 (ADCTGGGGSGGAGPGRGRRER) constitute a propeptide that is removed on maturation. The Extracellular portion of the chain corresponds to 42–477 (EALPPQKIEV…PCKASGGLEE (436 aa)). Residue N82 is glycosylated (N-linked (GlcNAc...) asparagine). 2 disulfide bridges follow: C104/C132 and C209/C257. 2 N-linked (GlcNAc...) asparagine glycosylation sites follow: N289 and N390. Residues 478–500 (SAVTGIVVGALLGAGLLMAFYFF) form a helical membrane-spanning segment. The Cytoplasmic portion of the chain corresponds to 501 to 537 (RKKYRITIERRNQQEESNVGKHRELREDSIRSHFSVA).

This sequence belongs to the ANF receptor family. Homodimer; disulfide-linked. Interacts with OSTN.

It is found in the cell membrane. Functionally, receptor for the natriuretic peptide hormones, binding with similar affinities atrial natriuretic peptide NPPA/ANP, brain natriuretic peptide NPPB/BNP, and C-type natriuretic peptide NPPC/CNP. May function as a clearance receptor for NPPA, NPPB and NPPC, regulating their local concentrations and effects. Acts as a regulator of osteoblast differentiation and bone growth by binding to its ligand osteocrin, thereby preventing binding between NPR3/NPR-C and natriuretic peptides, leading to increase cGMP production. In Bos taurus (Bovine), this protein is Atrial natriuretic peptide receptor 3 (NPR3).